A 400-amino-acid polypeptide reads, in one-letter code: Phosphoglycerate kinase (400 aa).

Substrate-binding positions include 21 to 23 (DFN), arginine 36, 59 to 62 (HCSR), arginine 118, and arginine 151. Residues lysine 201, glutamate 323, and 353–356 (GGDT) contribute to the ATP site.

This sequence belongs to the phosphoglycerate kinase family. As to quaternary structure, monomer.

The protein resides in the cytoplasm. The catalysed reaction is (2R)-3-phosphoglycerate + ATP = (2R)-3-phospho-glyceroyl phosphate + ADP. Its pathway is carbohydrate degradation; glycolysis; pyruvate from D-glyceraldehyde 3-phosphate: step 2/5. The polypeptide is Phosphoglycerate kinase (Bartonella bacilliformis (strain ATCC 35685 / KC583 / Herrer 020/F12,63)).